Consider the following 831-residue polypeptide: Phenylalanine--tRNA ligase beta subunit (831 aa).

Positions Gly44–Ala155 constitute a tRNA-binding domain. Residues Trp414–Ser489 form the B5 domain. Mg(2+)-binding residues include Asp467, Asp473, Glu476, and Glu477. The 94-residue stretch at Ser737–Arg830 folds into the FDX-ACB domain.

It belongs to the phenylalanyl-tRNA synthetase beta subunit family. Type 1 subfamily. As to quaternary structure, tetramer of two alpha and two beta subunits. Mg(2+) serves as cofactor.

It is found in the cytoplasm. It catalyses the reaction tRNA(Phe) + L-phenylalanine + ATP = L-phenylalanyl-tRNA(Phe) + AMP + diphosphate + H(+). The sequence is that of Phenylalanine--tRNA ligase beta subunit (pheT) from Mycobacterium tuberculosis (strain ATCC 25618 / H37Rv).